Here is a 388-residue protein sequence, read N- to C-terminus: GTPase Obg (388 aa).

The 159-residue stretch at 1–159 folds into the Obg domain; it reads MKFVDEATIR…RSLRLELMLL (159 aa). The region spanning 160–333 is the OBG-type G domain; the sequence is ADVGLLGMPN…LALKLLDFID (174 aa). Residues 166-173, 191-195, 213-216, 283-286, and 314-316 contribute to the GTP site; these read GMPNAGKS, FTTLV, DIPG, NKAD, and SAY. Mg(2+) contacts are provided by S173 and T193. The segment at 356–377 is disordered; sequence QNANESVNEDYDDDLDDDDYDD. The segment covering 362–377 has biased composition (acidic residues); it reads VNEDYDDDLDDDDYDD.

The protein belongs to the TRAFAC class OBG-HflX-like GTPase superfamily. OBG GTPase family. As to quaternary structure, monomer. Requires Mg(2+) as cofactor.

The protein localises to the cytoplasm. Functionally, an essential GTPase which binds GTP, GDP and possibly (p)ppGpp with moderate affinity, with high nucleotide exchange rates and a fairly low GTP hydrolysis rate. Plays a role in control of the cell cycle, stress response, ribosome biogenesis and in those bacteria that undergo differentiation, in morphogenesis control. This Shewanella piezotolerans (strain WP3 / JCM 13877) protein is GTPase Obg.